The following is a 250-amino-acid chain: tRNA (guanine-N(1)-)-methyltransferase (250 aa).

S-adenosyl-L-methionine is bound by residues G108 and 127-132 (LGDFVL).

Belongs to the RNA methyltransferase TrmD family. As to quaternary structure, homodimer.

It is found in the cytoplasm. It catalyses the reaction guanosine(37) in tRNA + S-adenosyl-L-methionine = N(1)-methylguanosine(37) in tRNA + S-adenosyl-L-homocysteine + H(+). Functionally, specifically methylates guanosine-37 in various tRNAs. The sequence is that of tRNA (guanine-N(1)-)-methyltransferase from Streptococcus agalactiae serotype Ia (strain ATCC 27591 / A909 / CDC SS700).